Here is a 72-residue protein sequence, read N- to C-terminus: SRY-related protein AES2 (72 aa).

A DNA-binding region (HMG box) is located at residues Val-1–Lys-69.

The protein localises to the nucleus. The protein is SRY-related protein AES2 of Alligator mississippiensis (American alligator).